The chain runs to 320 residues: Ferrochelatase (320 aa).

Histidine 194 and glutamate 275 together coordinate Fe cation.

Belongs to the ferrochelatase family.

The protein localises to the cytoplasm. The enzyme catalyses heme b + 2 H(+) = protoporphyrin IX + Fe(2+). The protein operates within porphyrin-containing compound metabolism; protoheme biosynthesis; protoheme from protoporphyrin-IX: step 1/1. In terms of biological role, catalyzes the ferrous insertion into protoporphyrin IX. The chain is Ferrochelatase from Pectobacterium atrosepticum (strain SCRI 1043 / ATCC BAA-672) (Erwinia carotovora subsp. atroseptica).